Consider the following 363-residue polypeptide: MSQSSEECAADQGQTCEETQKLQVAAASIDVEEPCSSPHLMATSLKDQTSEETQVSKDVEEPCSSSQLLMASDQDDSEDETASTSSDLQHPYDSSSESTEDLDDQEVQGSPVIPPDQSDSTDLPVMTVDGKVDFLVNYMLYKYQVKEVMSMNDIMTLIVREDEDRFHEILMRASERMEMVFGLDVKEVDPINHCYALFIKLGLTYDGMRNDEYSFPKTGLLILILGVVFMKGNRATEEEIWEVLNPMGIYAGMTHFMFGDPRELITDEFVREQYLEYQPIANSDPIQYEYVWGLRAKAETSKMRVLEFVAKVHGSDPTVFLSQYEEALIEEEERTLTMLLEHADSSSTSGESSSDTSSNFSQV.

Positions 33-124 are disordered; sequence EPCSSPHLMA…PDQSDSTDLP (92 aa). Residues 82–97 are compositionally biased toward low complexity; it reads ASTSSDLQHPYDSSSE. In terms of domain architecture, MAGE spans 128–327; the sequence is VDGKVDFLVN…TVFLSQYEEA (200 aa). A disordered region spans residues 342–363; that stretch reads HADSSSTSGESSSDTSSNFSQV.

This is Melanoma-associated antigen B16 (Mageb16) from Mus musculus (Mouse).